Consider the following 938-residue polypeptide: Isoleucine--tRNA ligase (938 aa).

A 'HIGH' region motif is present at residues 58–68; it reads PYANGNIHMGH. Glutamate 566 serves as a coordination point for L-isoleucyl-5'-AMP. Positions 607–611 match the 'KMSKS' region motif; sequence KMSKS. Lysine 610 contacts ATP. Cysteine 906, cysteine 909, cysteine 926, and cysteine 929 together coordinate Zn(2+).

This sequence belongs to the class-I aminoacyl-tRNA synthetase family. IleS type 1 subfamily. In terms of assembly, monomer. It depends on Zn(2+) as a cofactor.

The protein resides in the cytoplasm. It carries out the reaction tRNA(Ile) + L-isoleucine + ATP = L-isoleucyl-tRNA(Ile) + AMP + diphosphate. In terms of biological role, catalyzes the attachment of isoleucine to tRNA(Ile). As IleRS can inadvertently accommodate and process structurally similar amino acids such as valine, to avoid such errors it has two additional distinct tRNA(Ile)-dependent editing activities. One activity is designated as 'pretransfer' editing and involves the hydrolysis of activated Val-AMP. The other activity is designated 'posttransfer' editing and involves deacylation of mischarged Val-tRNA(Ile). The sequence is that of Isoleucine--tRNA ligase from Nitratidesulfovibrio vulgaris (strain DP4) (Desulfovibrio vulgaris).